Reading from the N-terminus, the 430-residue chain is Endochitinase 46 (430 aa).

A signal peptide spans 1 to 22 (MLSFLGKSVALLAALQATLSSA). Residues 23–35 (SPLATEERSIEKR) constitute a propeptide that is removed on maturation. One can recognise a GH18 domain in the interval 39–408 (YANSVYFTNW…GTSHRALGGL (370 aa)). Chitin is bound by residues 103–104 (GT) and 130–133 (GGWT). The active-site Proton donor is glutamate 172. Tyrosine 173 is a binding site for chitin. N-linked (GlcNAc...) asparagine glycosylation occurs at asparagine 219. Residues 238-241 (MAYD) and tryptophan 385 each bind chitin.

The protein belongs to the glycosyl hydrolase 18 family. Chitinase class V subfamily.

Its subcellular location is the secreted. It carries out the reaction Random endo-hydrolysis of N-acetyl-beta-D-glucosaminide (1-&gt;4)-beta-linkages in chitin and chitodextrins.. Functionally, secreted chitinase involved in the degradation of chitin, a component of the cell walls of fungi and exoskeletal elements of some animals (including worms and arthropods). Plays a morphogenetic role during apical growth, cell division and differentiation (cell wall morphogenesis). Also acts as an antifungal agent. Involved in the degradation and further assimilation of phytopathogenic fungi, namely mycoparasitism, the major mechanism accounting for the antagonistic activity against phytopathogenic fungi displayed by Trichoderma. This is Endochitinase 46 (chit46) from Trichoderma harzianum (Hypocrea lixii).